Here is a 139-residue protein sequence, read N- to C-terminus: Trafficking protein particle complex subunit 2-like protein (139 aa).

The protein belongs to the TRAPP small subunits family. Sedlin subfamily. As to quaternary structure, component of the multisubunit TRAPP (transport protein particle) complex, which includes at least TRAPPC2, TRAPPC2L, TRAPPC3, TRAPPC3L, TRAPPC4, TRAPPC5, TRAPPC8, TRAPPC9, TRAPPC10, TRAPPC11 and TRAPPC12. Interacts with the heterodimer TRAPPC3-TRAPPC6A.

Its subcellular location is the cytoplasm. The protein resides in the perinuclear region. It is found in the endoplasmic reticulum. The protein localises to the golgi apparatus. Functionally, may play a role in vesicular transport from endoplasmic reticulum to Golgi. The polypeptide is Trafficking protein particle complex subunit 2-like protein (Trappc2l) (Rattus norvegicus (Rat)).